The following is a 176-amino-acid chain: Urease accessory protein UreE (176 aa).

The protein belongs to the UreE family.

It localises to the cytoplasm. In terms of biological role, involved in urease metallocenter assembly. Binds nickel. Probably functions as a nickel donor during metallocenter assembly. This is Urease accessory protein UreE from Helicobacter bizzozeronii.